The chain runs to 222 residues: Kinetochore protein Spc25 (222 aa).

Positions 51–86 (RHQRKVGKLQKVLMERREELDKRVSFIEELDRELEA) form a coiled coil.

The protein belongs to the SPC25 family. As to quaternary structure, component of the Ndc80 complex, which is composed of Ndc80, Nuf2 and Spc25.

The protein resides in the nucleus. The protein localises to the chromosome. Its subcellular location is the centromere. It is found in the kinetochore. Functionally, acts as a component of the essential kinetochore-associated Ndc80 complex, which is required for chromosome segregation and spindle checkpoint activity during meiosis and mitosis. Required for kinetochore integrity and the organization of stable microtubule binding sites in the outer plate of the kinetochore. Participates in SAC signaling that responds specifically to disruptions in spindle microtubule dynamics. The NDC80 complex synergistically enhances the affinity of the SKA1 complex for microtubules and may allow the NDC80 complex to track depolymerizing microtubules. This Drosophila mauritiana (Fruit fly) protein is Kinetochore protein Spc25.